The chain runs to 61 residues: Photosystem II reaction center protein K (61 aa).

Positions Met1–Asp24 are excised as a propeptide. The helical transmembrane segment at Ile36–Ala56 threads the bilayer.

This sequence belongs to the PsbK family. As to quaternary structure, PSII is composed of 1 copy each of membrane proteins PsbA, PsbB, PsbC, PsbD, PsbE, PsbF, PsbH, PsbI, PsbJ, PsbK, PsbL, PsbM, PsbT, PsbX, PsbY, PsbZ, Psb30/Ycf12, at least 3 peripheral proteins of the oxygen-evolving complex and a large number of cofactors. It forms dimeric complexes.

The protein resides in the plastid. The protein localises to the chloroplast thylakoid membrane. One of the components of the core complex of photosystem II (PSII). PSII is a light-driven water:plastoquinone oxidoreductase that uses light energy to abstract electrons from H(2)O, generating O(2) and a proton gradient subsequently used for ATP formation. It consists of a core antenna complex that captures photons, and an electron transfer chain that converts photonic excitation into a charge separation. The polypeptide is Photosystem II reaction center protein K (Lotus japonicus (Lotus corniculatus var. japonicus)).